We begin with the raw amino-acid sequence, 129 residues long: D-ribose pyranase (129 aa).

Residue H20 is the Proton donor of the active site. Substrate contacts are provided by residues D28, H96, and 118–120; that span reads YAN.

This sequence belongs to the RbsD / FucU family. RbsD subfamily. Homodecamer.

The protein resides in the cytoplasm. The catalysed reaction is beta-D-ribopyranose = beta-D-ribofuranose. The protein operates within carbohydrate metabolism; D-ribose degradation; D-ribose 5-phosphate from beta-D-ribopyranose: step 1/2. Functionally, catalyzes the interconversion of beta-pyran and beta-furan forms of D-ribose. This chain is D-ribose pyranase, found in Exiguobacterium sibiricum (strain DSM 17290 / CCUG 55495 / CIP 109462 / JCM 13490 / 255-15).